The following is a 531-amino-acid chain: GPI alpha-1,2-mannosyltransferase 3 (531 aa).

Residue Asn-84 is glycosylated (N-linked (GlcNAc...) asparagine). 3 consecutive transmembrane segments (helical) span residues 99–119 (GLRG…LYLL), 124–144 (VWFL…IADV), and 174–196 (YCAT…LYYY). N-linked (GlcNAc...) asparagine glycosylation occurs at Asn-204. 6 helical membrane passes run 210 to 230 (LICV…WIPL), 249 to 269 (YLPI…IFFG), 303 to 323 (GVPV…MVTP), 328 to 348 (ILLV…HKEF), 350 to 370 (FIYP…SNLK), and 375 to 395 (AAVG…GLIH). Asn-414 and Asn-476 each carry an N-linked (GlcNAc...) asparagine glycan.

The protein belongs to the glycosyltransferase 22 family. PIGB subfamily.

Its subcellular location is the endoplasmic reticulum membrane. It functions in the pathway glycolipid biosynthesis; glycosylphosphatidylinositol-anchor biosynthesis. In terms of biological role, alpha-1,2-mannosyltransferase that catalyzes the transfer of the third mannose, via an alpha-1,2 bond, from a dolichol-phosphate-mannose (Dol-P-Man) to an alpha-D-Man-(1-&gt;6)-2-PEtn-alpha-D-Man-(1-&gt;4)-alpha-D-GlcN-(1-&gt;6)-(1-radyl,2-acyl-sn-glycero-3-phospho)-2-acyl-inositol intermediate to generate an alpha-D-Man-(1-&gt;2)-alpha-D-Man-(1-&gt;6)-2-PEtn-alpha-D-Man-(1-&gt;4)-alpha-D-GlcN-(1-&gt;6)-(1-radyl,2-acyl-sn-glycero-3-phospho)-2-acyl-inositol (also termed H6) and participates in the nineth step of the glycosylphosphatidylinositol-anchor biosynthesis. May also add the third mannose to an alpha-D-Man-(1-&gt;6)-alpha-D-Man-(1-&gt;4)-alpha-D-GlcN-(1-&gt;6)-(1-radyl,2-acyl-sn-glycero-3-phospho)-2-acyl-inositol (also termed H3) intermediate generating an alpha-D-Man-(1-&gt;2)-alpha-D-Man-(1-&gt;6)-alpha-D-Man-(1-&gt;4)-alpha-D-GlcN-(1-&gt;6)-(1-radyl,2-acyl-sn-glycero-3-phospho)-2-acyl-inositol (also termed H4). In Xenopus laevis (African clawed frog), this protein is GPI alpha-1,2-mannosyltransferase 3.